Reading from the N-terminus, the 199-residue chain is DNA dC-&gt;dU-editing enzyme APOBEC-3A (199 aa).

One can recognise a CMP/dCMP-type deaminase domain in the interval 27–143 (GRHKTYLCYE…PLYKEALQML (117 aa)). Histidine 70 is a Zn(2+) binding site. Glutamate 72 (proton donor) is an active-site residue. Cysteine 101 and cysteine 106 together coordinate Zn(2+).

Belongs to the cytidine and deoxycytidylate deaminase family. As to quaternary structure, interacts with AGO2. Interacts with TRIB3 (via N-terminus). Requires Zn(2+) as cofactor. Expressed in peripheral leukocytes with higher expression in CD14-positive phagocytic cells. Highly expressed in keratinocytes and in periphery blood monocytes. Also detected in non-lymphoid tissues including lung and adipose tissues. Found at high levels in colorectal adenocarcinoma, Burkitt's lymphoma and chronic myelogenous leukemia.

The protein resides in the nucleus. It localises to the cytoplasm. The enzyme catalyses a 2'-deoxycytidine in single-stranded DNA + H2O + H(+) = a 2'-deoxyuridine in single-stranded DNA + NH4(+). DNA deaminase (cytidine deaminase) with restriction activity against viruses, foreign DNA and mobility of retrotransposons. Exhibits antiviral activity against adeno-associated virus (AAV) and human T-cell leukemia virus type 1 (HTLV-1) and may inhibit the mobility of LTR and non-LTR retrotransposons. Selectively targets single-stranded DNA and can deaminate both methylcytosine and cytosine in foreign DNA. Can induce somatic hypermutation in the nuclear and mitochondrial DNA. May also play a role in the epigenetic regulation of gene expression through the process of active DNA demethylation. This is DNA dC-&gt;dU-editing enzyme APOBEC-3A (APOBEC3A) from Homo sapiens (Human).